The following is a 67-amino-acid chain: Phycobilisome 7.8 kDa linker polypeptide, allophycocyanin-associated, core (67 aa).

The CpcD-like domain maps to 1-56 (MRMFRITACVPSQTRIRTQRELQNTYFTKLVPYDNSFREQQRIMKMGGKIVKVELA).

The protein belongs to the phycobilisome linker protein family.

The protein resides in the cellular thylakoid membrane. In terms of biological role, rod linker protein, associated with allophycocyanin. Linker polypeptides determine the state of aggregation and the location of the disk-shaped phycobiliprotein units within the phycobilisome and modulate their spectroscopic properties in order to mediate a directed and optimal energy transfer. The chain is Phycobilisome 7.8 kDa linker polypeptide, allophycocyanin-associated, core (apcC) from Synechocystis sp. (strain ATCC 27184 / PCC 6803 / Kazusa).